Reading from the N-terminus, the 178-residue chain is MLEGVIRESITKANAKALKKDGYLIANVYGKGVENVSCAFKLNPFIKYLKEKKHLIFPVKLGDKTFEVVVQEYQKNPVTNELIHVDLLAVTKGVKSKFKVPVKYQGTPVGLKNKGILMLSKKRISVECAPEHLPNHYLVDVAPLDVNESILVRDLEKHENVKILDHDSIAVIGVIKAK.

The protein belongs to the bacterial ribosomal protein bL25 family. CTC subfamily. In terms of assembly, part of the 50S ribosomal subunit; part of the 5S rRNA/L5/L18/L25 subcomplex. Contacts the 5S rRNA. Binds to the 5S rRNA independently of L5 and L18.

Its function is as follows. This is one of the proteins that binds to the 5S RNA in the ribosome where it forms part of the central protuberance. The chain is Large ribosomal subunit protein bL25 from Helicobacter acinonychis (strain Sheeba).